A 661-amino-acid polypeptide reads, in one-letter code: Junctophilin-1 (661 aa).

Topologically, residues M1 to S639 are cytoplasmic. MORN repeat units lie at residues Y14–G36, Y38–T59, Y60–Y82, Y106–T128, and Y129–M151. A phosphoserine mark is found at S157, S216, and S220. Residues S228–R247 form a disordered region. MORN repeat units follow at residues Y281–K303 and Y304–K326. A compositionally biased stretch (basic and acidic residues) spans D433–H454. Residues D433–K631 are disordered. T448 carries the post-translational modification Phosphothreonine. S452 carries the phosphoserine modification. T461 bears the Phosphothreonine mark. 3 positions are modified to phosphoserine: S465, S469, and S475. Residues V599 to E613 are compositionally biased toward basic and acidic residues. A helical; Anchor for type IV membrane protein transmembrane segment spans residues I640–L660.

The protein belongs to the junctophilin family. Abundantly expressed in skeletal muscle. Very low levels in heart.

The protein localises to the cell membrane. It localises to the endoplasmic reticulum membrane. Its subcellular location is the sarcoplasmic reticulum membrane. Junctophilins contribute to the formation of junctional membrane complexes (JMCs) which link the plasma membrane with the endoplasmic or sarcoplasmic reticulum in excitable cells. Provides a structural foundation for functional cross-talk between the cell surface and intracellular calcium release channels. JPH1 contributes to the construction of the skeletal muscle triad by linking the t-tubule (transverse-tubule) and SR (sarcoplasmic reticulum) membranes. The sequence is that of Junctophilin-1 (JPH1) from Homo sapiens (Human).